Here is a 221-residue protein sequence, read N- to C-terminus: Epididymal secretory glutathione peroxidase (221 aa).

A signal peptide spans 1–21 (MTAWLGASYVLPILLVSFVQT). Cys73 is an active-site residue.

This sequence belongs to the glutathione peroxidase family. Epididymis.

The protein resides in the secreted. It catalyses the reaction 2 glutathione + H2O2 = glutathione disulfide + 2 H2O. In terms of biological role, protects cells and enzymes from oxidative damage, by catalyzing the reduction of hydrogen peroxide, lipid peroxides and organic hydroperoxide, by glutathione. May constitute a glutathione peroxidase-like protective system against peroxide damage in sperm membrane lipids. The sequence is that of Epididymal secretory glutathione peroxidase (GPX5) from Canis lupus familiaris (Dog).